The sequence spans 151 residues: Large ribosomal subunit protein bL9 (151 aa).

It belongs to the bacterial ribosomal protein bL9 family.

Its function is as follows. Binds to the 23S rRNA. The polypeptide is Large ribosomal subunit protein bL9 (Rhodococcus opacus (strain B4)).